The sequence spans 184 residues: NADH-quinone oxidoreductase subunit B 1 (184 aa).

[4Fe-4S] cluster is bound by residues Cys37, Cys38, Cys103, and Cys132.

Belongs to the complex I 20 kDa subunit family. In terms of assembly, NDH-1 is composed of 14 different subunits. Subunits NuoB, C, D, E, F, and G constitute the peripheral sector of the complex. It depends on [4Fe-4S] cluster as a cofactor.

The protein localises to the cell membrane. It catalyses the reaction a quinone + NADH + 5 H(+)(in) = a quinol + NAD(+) + 4 H(+)(out). In terms of biological role, NDH-1 shuttles electrons from NADH, via FMN and iron-sulfur (Fe-S) centers, to quinones in the respiratory chain. The immediate electron acceptor for the enzyme in this species is believed to be a menaquinone. Couples the redox reaction to proton translocation (for every two electrons transferred, four hydrogen ions are translocated across the cytoplasmic membrane), and thus conserves the redox energy in a proton gradient. In Streptomyces griseus subsp. griseus (strain JCM 4626 / CBS 651.72 / NBRC 13350 / KCC S-0626 / ISP 5235), this protein is NADH-quinone oxidoreductase subunit B 1.